Consider the following 280-residue polypeptide: Phosphatidylglycerol--prolipoprotein diacylglyceryl transferase (280 aa).

Transmembrane regions (helical) follow at residues 26–46 (LAIH…WFYA), 71–91 (FILW…ILFY), 106–126 (IWNG…AMIL), and 132–152 (GIPV…GLLF). Residue R154 coordinates a 1,2-diacyl-sn-glycero-3-phospho-(1'-sn-glycerol). 3 consecutive transmembrane segments (helical) span residues 193-213 (GLEG…FKAL), 217-237 (GTVT…VEFF), and 251-271 (WLTM…WAVL).

The protein belongs to the Lgt family.

The protein localises to the cell inner membrane. It catalyses the reaction L-cysteinyl-[prolipoprotein] + a 1,2-diacyl-sn-glycero-3-phospho-(1'-sn-glycerol) = an S-1,2-diacyl-sn-glyceryl-L-cysteinyl-[prolipoprotein] + sn-glycerol 1-phosphate + H(+). It functions in the pathway protein modification; lipoprotein biosynthesis (diacylglyceryl transfer). In terms of biological role, catalyzes the transfer of the diacylglyceryl group from phosphatidylglycerol to the sulfhydryl group of the N-terminal cysteine of a prolipoprotein, the first step in the formation of mature lipoproteins. The protein is Phosphatidylglycerol--prolipoprotein diacylglyceryl transferase of Agrobacterium fabrum (strain C58 / ATCC 33970) (Agrobacterium tumefaciens (strain C58)).